The following is a 525-amino-acid chain: uncharacterized protein (525 aa).

Positions 1–21 (MLECLSALLVLFAGGGGSVLA) are cleaved as a signal peptide. The Extracellular portion of the chain corresponds to 22-448 (AVQSKTVADP…ISAASQLDKR (427 aa)). A disordered region spans residues 242–264 (KVSSENCSKDTDDKSGSKKERNT). Residues 449–469 (IFIFTAITVSITTLMMLGFSY) traverse the membrane as a helical segment. Over 470-525 (RSRVSFRDHSIDDSDDDNDWSDDEVEFDEEYFYSLPVSIPEKGISLDKMAQQLGVE) the chain is Cytoplasmic.

Its subcellular location is the membrane. This is an uncharacterized protein from Saccharomyces cerevisiae (strain YJM789) (Baker's yeast).